Consider the following 313-residue polypeptide: PGR5-like protein 1B, chloroplastic (313 aa).

The transit peptide at 1–49 (MAFTLTIPRFSAISRKPITCSSSRTQCPAPFTHGRSISLRRRLTLLPLK) directs the protein to the chloroplast. Alanine 50 is subject to N-acetylalanine. Residues 50–187 (ASTDQSGQVG…KVYSDLAIDY (138 aa)) lie on the Stromal side of the membrane. Cysteine 71 and cysteine 172 are joined by a disulfide. Residues 188-208 (FKMFLLNVPATVVALGLFFFL) form a helical membrane-spanning segment. The Lumenal, thylakoid segment spans residues 209–225 (DDITGFEITYLLELPEP). The chain crosses the membrane as a helical span at residues 226–246 (FSFIFTWFAAVPAIVYLALSL). At 247-313 (TKLILKDFLI…LITLPEGGKA (67 aa)) the chain is on the stromal side.

Belongs to the PGR5 family. As to quaternary structure, homodimer and heterodimer with PGR5. Interacts with PGR5, FD2, psaD1, LFNR1 and LFNR2. Also interacts with petC and a Fe-containing cofactor (FCC). Post-translationally, disulfide bonds; Cys-289 and Cys-292 are probably involved in the formation of disulfide bridges with 'Cys-11' and 'Cys-105' of PGR5 while Cys-261 and Cys-264 are probably involved in the binding of a Fe-containing cofactor (FCC).

It is found in the plastid. Its subcellular location is the chloroplast thylakoid membrane. With respect to regulation, inhibited by antimycin A. Functionally, ferredoxin-plastoquinone reductase involved in cyclic electron flow (CEF) around photosystem I. The homodimer is probably not involved in CEF. The protein is PGR5-like protein 1B, chloroplastic (PGRL1B) of Arabidopsis thaliana (Mouse-ear cress).